The primary structure comprises 85 residues: Probable oxaloacetate decarboxylase gamma chain (85 aa).

Residues Ala-11–Val-33 traverse the membrane as a helical segment.

The protein belongs to the OadG family. As to quaternary structure, heterotrimer of an alpha, a beta and a gamma subunit. Na(+) is required as a cofactor.

It localises to the cell membrane. The catalysed reaction is oxaloacetate + 2 Na(+)(in) + H(+) = pyruvate + 2 Na(+)(out) + CO2. Functionally, catalyzes the decarboxylation of oxaloacetate coupled to Na(+) translocation. This Vibrio vulnificus (strain CMCP6) protein is Probable oxaloacetate decarboxylase gamma chain.